A 286-amino-acid polypeptide reads, in one-letter code: Bifunctional protein FolD (286 aa).

NADP(+) is bound by residues 165 to 167 and serine 190; that span reads GRS.

The protein belongs to the tetrahydrofolate dehydrogenase/cyclohydrolase family. Homodimer.

The enzyme catalyses (6R)-5,10-methylene-5,6,7,8-tetrahydrofolate + NADP(+) = (6R)-5,10-methenyltetrahydrofolate + NADPH. The catalysed reaction is (6R)-5,10-methenyltetrahydrofolate + H2O = (6R)-10-formyltetrahydrofolate + H(+). It functions in the pathway one-carbon metabolism; tetrahydrofolate interconversion. Catalyzes the oxidation of 5,10-methylenetetrahydrofolate to 5,10-methenyltetrahydrofolate and then the hydrolysis of 5,10-methenyltetrahydrofolate to 10-formyltetrahydrofolate. This chain is Bifunctional protein FolD, found in Staphylococcus aureus (strain bovine RF122 / ET3-1).